The following is a 327-amino-acid chain: tRNA pseudouridine synthase B (327 aa).

Aspartate 83 serves as the catalytic Nucleophile.

It belongs to the pseudouridine synthase TruB family. Type 1 subfamily.

The catalysed reaction is uridine(55) in tRNA = pseudouridine(55) in tRNA. In terms of biological role, responsible for synthesis of pseudouridine from uracil-55 in the psi GC loop of transfer RNAs. The protein is tRNA pseudouridine synthase B of Mesomycoplasma hyopneumoniae (strain 232) (Mycoplasma hyopneumoniae).